Reading from the N-terminus, the 299-residue chain is Very long chain fatty acid elongase 5 (299 aa).

An N-acetylmethionine modification is found at methionine 1. The next 7 membrane-spanning stretches (helical) occupy residues 26-46 (WFLLDNYIPTFVCSVIYLLIV), 64-84 (ILQLYNLGLTLLSLYMFYELV), 112-132 (VLWWYYFSKLIEFMDTFFFIL), 139-158 (ITVLHVYHHATMLNIWWFVM), 168-187 (FGATLNSFIHVLMYSYYGLS), 205-225 (GQLVQFVLTIIQTTCGVFWPC), and 227-247 (FPLGWLFFQIGYMISLIALFT). The disordered stretch occupies residues 274 to 299 (VAAVNGHTNSFPSLENSVKPRKQRKD). Polar residues predominate over residues 279-289 (GHTNSFPSLEN).

This sequence belongs to the ELO family. ELOVL5 subfamily. As to quaternary structure, interacts with TECR.

The protein resides in the endoplasmic reticulum membrane. It localises to the cell projection. The protein localises to the dendrite. The enzyme catalyses a very-long-chain acyl-CoA + malonyl-CoA + H(+) = a very-long-chain 3-oxoacyl-CoA + CO2 + CoA. The catalysed reaction is (6Z,9Z,12Z)-octadecatrienoyl-CoA + malonyl-CoA + H(+) = (8Z,11Z,14Z)-3-oxoeicosatrienoyl-CoA + CO2 + CoA. It carries out the reaction (9Z,12Z,15Z)-octadecatrienoyl-CoA + malonyl-CoA + H(+) = (11Z,14Z,17Z)-3-oxoeicosatrienoyl-CoA + CO2 + CoA. It catalyses the reaction (9Z)-hexadecenoyl-CoA + malonyl-CoA + H(+) = 3-oxo-(11Z)-octadecenoyl-CoA + CO2 + CoA. The enzyme catalyses (9Z)-octadecenoyl-CoA + malonyl-CoA + H(+) = 3-oxo-(11Z)-eicosenoyl-CoA + CO2 + CoA. The catalysed reaction is (11Z)-octadecenoyl-CoA + malonyl-CoA + H(+) = 3-oxo-(13Z)-eicosenoyl-CoA + CO2 + CoA. It carries out the reaction (9Z,12Z)-octadecadienoyl-CoA + malonyl-CoA + H(+) = (11Z,14Z)-3-oxoicosa-11,14-dienoyl-CoA + CO2 + CoA. It catalyses the reaction (6Z,9Z,12Z,15Z)-octadecatetraenoyl-CoA + malonyl-CoA + H(+) = (8Z,11Z,14Z,17Z)-3-oxoicosatetraenoyl-CoA + CO2 + CoA. The enzyme catalyses (5Z,8Z,11Z,14Z)-eicosatetraenoyl-CoA + malonyl-CoA + H(+) = (7Z,10Z,13Z,16Z)-3-oxodocosatetraenoyl-CoA + CO2 + CoA. The catalysed reaction is (5Z,8Z,11Z,14Z,17Z)-eicosapentaenoyl-CoA + malonyl-CoA + H(+) = 3-oxo-(7Z,10Z,13Z,16Z,19Z)-docosapentaenoyl-CoA + CO2 + CoA. The protein operates within lipid metabolism; polyunsaturated fatty acid biosynthesis. Catalyzes the first and rate-limiting reaction of the four reactions that constitute the long-chain fatty acids elongation cycle. This endoplasmic reticulum-bound enzymatic process allows the addition of 2 carbons to the chain of long- and very long-chain fatty acids (VLCFAs) per cycle. Condensing enzyme that acts specifically toward polyunsaturated acyl-CoA with the higher activity toward C18:3(n-6) acyl-CoA. May participate in the production of monounsaturated and of polyunsaturated VLCFAs of different chain lengths that are involved in multiple biological processes as precursors of membrane lipids and lipid mediators. In conditions where the essential linoleic and alpha linoleic fatty acids are lacking it is also involved in the synthesis of Mead acid from oleic acid. This is Very long chain fatty acid elongase 5 from Mus musculus (Mouse).